Reading from the N-terminus, the 311-residue chain is Glycosyltransferase 6 domain-containing protein 1 (311 aa).

Residues 1–5 (MKAKG) are Cytoplasmic-facing. Residues 6 to 26 (RILLLTSCLFLLLLLLAKIHL) traverse the membrane as a helical; Signal-anchor for type II membrane protein segment. Residues 27–311 (RNHQEEELPL…KVAHYPTDDL (285 aa)) are Lumenal-facing. Asparagine 77 carries an N-linked (GlcNAc...) asparagine glycan. Substrate-binding positions include 85–90 (FAVSSF), 176–178 (SVN), and 198–201 (HAWW). Glutamate 266 acts as the Nucleophile in catalysis.

The protein belongs to the glycosyltransferase 6 family. Requires Mn(2+) as cofactor.

It is found in the membrane. This chain is Glycosyltransferase 6 domain-containing protein 1 (Glt6d1), found in Rattus norvegicus (Rat).